Here is a 526-residue protein sequence, read N- to C-terminus: Peptide chain release factor 3 (526 aa).

The tr-type G domain occupies 9-277 (NKRRTFAIIS…DFVEYAPGPQ (269 aa)). GTP-binding positions include 18–25 (SHPDAGKT), 86–90 (DTPGH), and 140–143 (NKLD).

The protein belongs to the TRAFAC class translation factor GTPase superfamily. Classic translation factor GTPase family. PrfC subfamily.

The protein localises to the cytoplasm. Functionally, increases the formation of ribosomal termination complexes and stimulates activities of RF-1 and RF-2. It binds guanine nucleotides and has strong preference for UGA stop codons. It may interact directly with the ribosome. The stimulation of RF-1 and RF-2 is significantly reduced by GTP and GDP, but not by GMP. The chain is Peptide chain release factor 3 from Legionella pneumophila (strain Corby).